A 92-amino-acid chain; its full sequence is MGRSLKKGPFVDDHLMKKVEAAAESEKKQVIKTWSRRSTIFPTFVGQTIAVYDGRKHVPVYVQEDMVGHKLGEFAPTRTYRGHAGDDKKTKR.

This sequence belongs to the universal ribosomal protein uS19 family.

Functionally, protein S19 forms a complex with S13 that binds strongly to the 16S ribosomal RNA. This Listeria innocua serovar 6a (strain ATCC BAA-680 / CLIP 11262) protein is Small ribosomal subunit protein uS19.